Reading from the N-terminus, the 545-residue chain is Chaperonin GroEL 1 (545 aa).

ATP-binding positions include 30 to 33 (TLGP), Lys51, 87 to 91 (DGTTT), Gly415, and Asp495.

The protein belongs to the chaperonin (HSP60) family. In terms of assembly, forms a cylinder of 14 subunits composed of two heptameric rings stacked back-to-back. Interacts with the co-chaperonin GroES.

It localises to the cytoplasm. The catalysed reaction is ATP + H2O + a folded polypeptide = ADP + phosphate + an unfolded polypeptide.. Its function is as follows. Together with its co-chaperonin GroES, plays an essential role in assisting protein folding. The GroEL-GroES system forms a nano-cage that allows encapsulation of the non-native substrate proteins and provides a physical environment optimized to promote and accelerate protein folding. The protein is Chaperonin GroEL 1 of Sinorhizobium medicae (strain WSM419) (Ensifer medicae).